The chain runs to 139 residues: D-ribose pyranase (139 aa).

His20 serves as the catalytic Proton donor. Residues Asp28, His106, and 128-130 contribute to the substrate site; that span reads YAN.

It belongs to the RbsD / FucU family. RbsD subfamily. As to quaternary structure, homodecamer.

It is found in the cytoplasm. It catalyses the reaction beta-D-ribopyranose = beta-D-ribofuranose. Its pathway is carbohydrate metabolism; D-ribose degradation; D-ribose 5-phosphate from beta-D-ribopyranose: step 1/2. Its function is as follows. Catalyzes the interconversion of beta-pyran and beta-furan forms of D-ribose. This Maridesulfovibrio salexigens (strain ATCC 14822 / DSM 2638 / NCIMB 8403 / VKM B-1763) (Desulfovibrio salexigens) protein is D-ribose pyranase.